The chain runs to 393 residues: Lipid-A-disaccharide synthase (393 aa).

The protein belongs to the LpxB family.

It catalyses the reaction a lipid X + a UDP-2-N,3-O-bis[(3R)-3-hydroxyacyl]-alpha-D-glucosamine = a lipid A disaccharide + UDP + H(+). Its pathway is bacterial outer membrane biogenesis; LPS lipid A biosynthesis. In terms of biological role, condensation of UDP-2,3-diacylglucosamine and 2,3-diacylglucosamine-1-phosphate to form lipid A disaccharide, a precursor of lipid A, a phosphorylated glycolipid that anchors the lipopolysaccharide to the outer membrane of the cell. The sequence is that of Lipid-A-disaccharide synthase from Bordetella petrii (strain ATCC BAA-461 / DSM 12804 / CCUG 43448).